We begin with the raw amino-acid sequence, 185 residues long: Regulator of rDNA transcription protein 13 (185 aa).

WD repeat units lie at residues 9–48 (GHTD…NNGE), 71–108 (GHRA…LKHF), and 111–148 (HTQL…LVRS).

May be involved in the modulation of rDNA transcription. This chain is Regulator of rDNA transcription protein 13 (RRT13), found in Saccharomyces cerevisiae (strain ATCC 204508 / S288c) (Baker's yeast).